The sequence spans 141 residues: Protein KRTCAP2 homolog (141 aa).

The next 4 membrane-spanning stretches (helical) occupy residues 11-31 (VVSSIISGLLSIVLFGTLRFC), 42-62 (VLLGGYLFSWVFILSLTCVSN), 74-94 (AKLLPEIIFCLSLTVAAAGLV), and 97-117 (VCATTSVLFSLVGLYFLNRIS).

It belongs to the KRTCAP2 family. In terms of assembly, component of the oligosaccharyltransferase (OST) complex.

The protein localises to the membrane. Subunit of the oligosaccharyl transferase (OST) complex that catalyzes the initial transfer of a defined glycan (Glc(3)Man(9)GlcNAc(2) in eukaryotes) from the lipid carrier dolichol-pyrophosphate to an asparagine residue within an Asn-X-Ser/Thr consensus motif in nascent polypeptide chains, the first step in protein N-glycosylation. N-glycosylation occurs cotranslationally and the complex associates with the Sec61 complex at the channel-forming translocon complex that mediates protein translocation across the endoplasmic reticulum (ER). All subunits are required for a maximal enzyme activity. The chain is Protein KRTCAP2 homolog from Drosophila melanogaster (Fruit fly).